A 213-amino-acid polypeptide reads, in one-letter code: MGITMDEEVIFETPRELISIKRIKDIPRSKDTHVFAACITSDGYPLIGARRTSFAFQAILSQQNSDSIFRVSTKLLRFMYYNELREIFRRLRKGSINNIDPHFEELILLGGKLDKKESIKDCLRRELKEESDERITVKEFGNVILKLTTRDKLFNKVYISYCMACFINQSLEDLSHTSIYNVEIRKIKSLNDCINDDKYEYLSYIYNMLVNSK.

Residues E16 and R50 each contribute to the N(7)-methyl-GTP site. The region spanning 30 to 209 (KDTHVFAACI…EYLSYIYNML (180 aa)) is the Nudix hydrolase domain. The Nudix box motif lies at 111-132 (GKLDKKESIKDCLRRELKEESD). E117, E126, E130, D151, and E183 together coordinate Mg(2+). E126 serves as the catalytic Nucleophile. N(7)-methyl-GTP is bound at residue D151.

The protein belongs to the Nudix hydrolase family. Requires Mg(2+) as cofactor. Mn(2+) is required as a cofactor.

The enzyme catalyses a 5'-end (N(7)-methyl 5'-triphosphoguanosine)-guanosine in mRNA + H2O = a 5'-end phospho-guanosine in mRNA + N(7)-methyl-GDP + 2 H(+). In terms of biological role, decapping enzyme that remove the protective 5'-cap from both host and viral mRNAs to commit transcripts for decay by the cellular exonuclease XRN1. Accelerates viral and cellular mRNA turnover to eliminate competing host mRNAs and allow stage-specific synthesis of viral proteins. Acceleration of the turnover of cellular transcripts may even promote the shutoff of host protein synthesis. The protein is mRNA-decapping protein OPG121 (OPG121) of Homo sapiens (Human).